A 1228-amino-acid polypeptide reads, in one-letter code: Multimerin-1 (1228 aa).

The signal sequence occupies residues 1–19 (MKGARLFVLLSSLWSGGIG). Asparagine 21 is a glycosylation site (N-linked (GlcNAc...) asparagine). The segment at 68 to 98 (TPEARTSEDSLLKSTLPPSETSAPAEGVRNQ) is disordered. Polar residues predominate over residues 79-89 (LKSTLPPSETS). Residues asparagine 97, asparagine 114, and asparagine 120 are each glycosylated (N-linked (GlcNAc...) asparagine). N-linked (GlcNAc...) (complex) asparagine glycosylation is present at asparagine 136. The interval 157 to 200 (NTVGGTGGIGGVGGTGGVGNRAPRETYLSRGDSSSSQRTDYQKS) is disordered. Residues 160 to 175 (GGTGGIGGVGGTGGVG) are compositionally biased toward gly residues. The Cell attachment site motif lies at 186 to 188 (RGD). The segment covering 187–200 (GDSSSSQRTDYQKS) has biased composition (polar residues). The region spanning 207–282 (GKNWCAYVHT…PGYSGPKCQL (76 aa)) is the EMI domain. 3 cysteine pairs are disulfide-bonded: cysteine 211–cysteine 272, cysteine 238–cysteine 245, and cysteine 271–cysteine 280. An O-linked (Fuc) threonine glycan is attached at threonine 216. Threonine 265 is a glycosylation site (O-linked (Fuc) threonine). 2 coiled-coil regions span residues 333–365 (MKLTLLQKKIDNISLTVNDVRNTYSSLEGKVSE) and 400–430 (NDMQETVAQLFKTVSSLSEDLESTRQIIQKV). Residue asparagine 344 is glycosylated (N-linked (GlcNAc...) asparagine). Residues asparagine 431, asparagine 507, asparagine 541, asparagine 576, asparagine 618, asparagine 680, asparagine 729, asparagine 783, asparagine 816, asparagine 828, asparagine 840, asparagine 921, asparagine 933, asparagine 942, asparagine 981, and asparagine 1020 are each glycosylated (N-linked (GlcNAc...) asparagine). Residues 503–523 (YESLNKTLSKLKEVHEQLLST) are a coiled coil. 2 coiled-coil regions span residues 580-650 (SLEM…EILQ) and 675-726 (RKKI…EMED). Residues 819–869 (NFQKMYQMFNETTSQVRKYQQNMSHLEEKLLLTTKISKNFETRLQDIESKV) are a coiled coil. The EGF-like domain occupies 1041–1077 (EYSSCSRHPCQNGGTCINGRTSFTCACRHPFTGDNCT). Intrachain disulfides connect cysteine 1045–cysteine 1056, cysteine 1050–cysteine 1065, and cysteine 1067–cysteine 1076. Threonine 1055 is a glycosylation site (O-linked (Fuc) threonine). N-linked (GlcNAc...) asparagine glycosylation occurs at asparagine 1075. The 133-residue stretch at 1096–1228 (RYAPMVAFFA…TFSGYLLYRT (133 aa)) folds into the C1q domain.

As to quaternary structure, multimeric. Composed of varying sized, disulfide-linked multimers, the smallest of which is a homotrimer. Proteolysis of the promultimerin in the N-terminal region, leads to the mature p155 form that is stored in platelets. Interacts with factor V/Va. In terms of processing, the N-terminus is blocked. Post-translationally, extensively N-glycosylated. O-fucosylated within the EMI domain (at Thr-216 and Thr-265) by FUT10/POFUT3 and FUT11/POFUT4. O-fucosylation at Thr-216 and Thr-1055 are required for facilitating protein folding and secretion. In terms of tissue distribution, synthesized by endothelial cells and megakaryocytes. Stored in platelet alpha granules and endothelial cell Weibel-Palade bodies, following activation of these cells, it is released and attached to megakaryocytes, platelets, endothelium and subendothelium of blood vessels. Not found in plasma. Found in vascular tissues such as placenta, lung, and liver.

It localises to the secreted. Functionally, carrier protein for platelet (but not plasma) factor V/Va. Plays a role in the storage and stabilization of factor V in platelets. Upon release following platelet activation, may limit platelet and plasma factor Va-dependent thrombin generation. Ligand for integrin alpha-IIb/beta-3 and integrin alpha-V/beta-3 on activated platelets, and may function as an extracellular matrix or adhesive protein. This Homo sapiens (Human) protein is Multimerin-1 (MMRN1).